The following is a 127-amino-acid chain: Mediator of RNA polymerase II transcription subunit 31 (127 aa).

The protein belongs to the Mediator complex subunit 31 family. As to quaternary structure, component of the Mediator complex, which is composed of at least 21 subunits that form three structurally distinct submodules. The Mediator head module contains MED6, MED8, MED11, SRB4/MED17, SRB5/MED18, ROX3/MED19, SRB2/MED20 and SRB6/MED22, the middle module contains MED1, MED4, NUT1/MED5, MED7, CSE2/MED9, NUT2/MED10, SRB7/MED21 and SOH1/MED31, and the tail module contains MED2, PGD1/MED3, RGR1/MED14, GAL11/MED15 and SIN4/MED16. The head and the middle modules interact directly with RNA polymerase II, whereas the elongated tail module interacts with gene-specific regulatory proteins.

It localises to the nucleus. Its function is as follows. Component of the Mediator complex, a coactivator involved in the regulated transcription of nearly all RNA polymerase II-dependent genes. Mediator functions as a bridge to convey information from gene-specific regulatory proteins to the basal RNA polymerase II transcription machinery. The Mediator complex, having a compact conformation in its free form, is recruited to promoters by direct interactions with regulatory proteins and serves for the assembly of a functional preinitiation complex with RNA polymerase II and the general transcription factors. The Mediator complex unfolds to an extended conformation and partially surrounds RNA polymerase II, specifically interacting with the unphosphorylated form of the C-terminal domain (CTD) of RNA polymerase II. The Mediator complex dissociates from the RNA polymerase II holoenzyme and stays at the promoter when transcriptional elongation begins. The sequence is that of Mediator of RNA polymerase II transcription subunit 31 (SOH1) from Saccharomyces cerevisiae (strain ATCC 204508 / S288c) (Baker's yeast).